The following is a 761-amino-acid chain: Phosphoribosylformylglycinamidine synthase subunit PurL (761 aa).

The active site involves histidine 48. ATP is bound by residues tyrosine 51 and lysine 90. Residue glutamate 92 coordinates Mg(2+). Substrate is bound by residues 93–96 and arginine 115; that span reads SHNH. Histidine 94 functions as the Proton acceptor in the catalytic mechanism. Aspartate 116 is a binding site for Mg(2+). Glutamine 239 is a substrate binding site. A Mg(2+)-binding site is contributed by aspartate 267. 311–313 contacts substrate; sequence ESQ. 2 residues coordinate ATP: aspartate 499 and glycine 536. Residue asparagine 537 participates in Mg(2+) binding. Residue serine 539 coordinates substrate.

Belongs to the FGAMS family. As to quaternary structure, monomer. Part of the FGAM synthase complex composed of 1 PurL, 1 PurQ and 2 PurS subunits.

Its subcellular location is the cytoplasm. The catalysed reaction is N(2)-formyl-N(1)-(5-phospho-beta-D-ribosyl)glycinamide + L-glutamine + ATP + H2O = 2-formamido-N(1)-(5-O-phospho-beta-D-ribosyl)acetamidine + L-glutamate + ADP + phosphate + H(+). It participates in purine metabolism; IMP biosynthesis via de novo pathway; 5-amino-1-(5-phospho-D-ribosyl)imidazole from N(2)-formyl-N(1)-(5-phospho-D-ribosyl)glycinamide: step 1/2. In terms of biological role, part of the phosphoribosylformylglycinamidine synthase complex involved in the purines biosynthetic pathway. Catalyzes the ATP-dependent conversion of formylglycinamide ribonucleotide (FGAR) and glutamine to yield formylglycinamidine ribonucleotide (FGAM) and glutamate. The FGAM synthase complex is composed of three subunits. PurQ produces an ammonia molecule by converting glutamine to glutamate. PurL transfers the ammonia molecule to FGAR to form FGAM in an ATP-dependent manner. PurS interacts with PurQ and PurL and is thought to assist in the transfer of the ammonia molecule from PurQ to PurL. This Thermosynechococcus vestitus (strain NIES-2133 / IAM M-273 / BP-1) protein is Phosphoribosylformylglycinamidine synthase subunit PurL.